We begin with the raw amino-acid sequence, 55 residues long: uncharacterized protein (55 aa).

The segment at 1–25 is disordered; the sequence is MKNNDKKKEVQRKYREEIKKKKQKN. A helical transmembrane segment spans residues 35–55; that stretch reads TIIVVTIIVLFIFFTYTLQGF.

The protein resides in the membrane. This is an uncharacterized protein from Bacillus subtilis (strain 168).